The chain runs to 76 residues: Exodeoxyribonuclease 7 small subunit (76 aa).

This sequence belongs to the XseB family. Heterooligomer composed of large and small subunits.

The protein resides in the cytoplasm. The enzyme catalyses Exonucleolytic cleavage in either 5'- to 3'- or 3'- to 5'-direction to yield nucleoside 5'-phosphates.. Its function is as follows. Bidirectionally degrades single-stranded DNA into large acid-insoluble oligonucleotides, which are then degraded further into small acid-soluble oligonucleotides. The chain is Exodeoxyribonuclease 7 small subunit from Enterococcus faecalis (strain ATCC 700802 / V583).